The chain runs to 792 residues: LPS-assembly protein LptD (792 aa).

A signal peptide spans 1–22 (MYRVLRLLPLPLSVAISLSALA).

This sequence belongs to the LptD family. As to quaternary structure, component of the lipopolysaccharide transport and assembly complex. Interacts with LptE and LptA.

It localises to the cell outer membrane. Functionally, together with LptE, is involved in the assembly of lipopolysaccharide (LPS) at the surface of the outer membrane. This is LPS-assembly protein LptD from Xylella fastidiosa (strain Temecula1 / ATCC 700964).